A 662-amino-acid polypeptide reads, in one-letter code: Polyunsaturated fatty acid (12S)/(13S)-lipoxygenase, epidermal-type (662 aa).

The 113-residue stretch at 2–114 (VKYKILVATG…TICLTEGTAL (113 aa)) folds into the PLAT domain. The 548-residue stretch at 115 to 662 (KVTDDTQNLF…PSLVENSVTI (548 aa)) folds into the Lipoxygenase domain. Residues histidine 360, histidine 365, histidine 540, and isoleucine 662 each coordinate Fe cation.

The protein belongs to the lipoxygenase family. It depends on Fe cation as a cofactor. Expressed in epidermis.

The protein resides in the cytoplasm. The enzyme catalyses (5Z,8Z,11Z,14Z)-eicosatetraenoate + O2 = (12S)-hydroperoxy-(5Z,8Z,10E,14Z)-eicosatetraenoate. It catalyses the reaction 1-O-methyl-(9Z,12Z)-octadecadienoate + O2 = 1-O-methyl-(13S)-hydroperoxy-(9Z,11E)-octadecadienoate. It carries out the reaction (8Z,11Z,14Z)-eicosatrienoate + O2 = (12S)-hydroperoxy-(8Z,10E,14Z)-eicosatrienoate. The catalysed reaction is (5Z,8Z,11Z)-eicosatrienoate + O2 = (12S)-hydroperoxy-(5Z,8Z,10E)-eicosatrienoate. The enzyme catalyses 1-O-methyl-(5Z,8Z,11Z,14Z)-eicosatetraenoate + O2 = 1-O-methyl-(12S)-hydroperoxy-(5Z,8Z,10E,14Z)-eicosatetraenoate. It catalyses the reaction (9Z,12Z)-octadecadienoate + O2 = (13S)-hydroperoxy-(9Z,11E)-octadecadienoate. It carries out the reaction (4Z,7Z,10Z,13Z,16Z,19Z)-docosahexaenoate + O2 = (14S)-hydroperoxy-(4Z,7Z,10Z,12E,16Z,19Z)-docosahexaenoate. Its pathway is lipid metabolism; hydroperoxy eicosatetraenoic acid biosynthesis. Arachidonate 12-lipoxygenase activity is decreased when the pH decreases from 7.4 to 6.0. Functionally, catalyzes the regio and stereo-specific incorporation of a single molecule of dioxygen into free and esterified polyunsaturated fatty acids generating lipid hydroperoxides that can be further reduced to the corresponding hydroxy species. Shows increasing catalytic activity within the series arachidonic acid &lt; 5,8,11-eicosatrienoic acid &lt; linoleic acid &lt; 8,11,14-eicosatrienoic acid. The polypeptide is Polyunsaturated fatty acid (12S)/(13S)-lipoxygenase, epidermal-type (Mus musculus (Mouse)).